We begin with the raw amino-acid sequence, 770 residues long: uncharacterized protein (770 aa).

The signal sequence occupies residues 1-24; that stretch reads MVSAAWLRYPSLLTLGILVSRVAA. Asn78, Asn204, Asn533, and Asn638 each carry an N-linked (GlcNAc...) asparagine glycan. The disordered stretch occupies residues 746 to 770; the sequence is SWGTGQNDVPPSLGAGIKRDGLRFT.

This sequence belongs to the glycosyl hydrolase 92 family.

Its subcellular location is the secreted. This is an uncharacterized protein from Arthroderma benhamiae (strain ATCC MYA-4681 / CBS 112371) (Trichophyton mentagrophytes).